The primary structure comprises 333 residues: Ribosomal RNA small subunit methyltransferase H (333 aa).

S-adenosyl-L-methionine is bound by residues 34–36 (GGH), Asp-59, Phe-86, Asp-112, and Gln-119.

Belongs to the methyltransferase superfamily. RsmH family.

The protein resides in the cytoplasm. The catalysed reaction is cytidine(1402) in 16S rRNA + S-adenosyl-L-methionine = N(4)-methylcytidine(1402) in 16S rRNA + S-adenosyl-L-homocysteine + H(+). In terms of biological role, specifically methylates the N4 position of cytidine in position 1402 (C1402) of 16S rRNA. This is Ribosomal RNA small subunit methyltransferase H from Prosthecochloris aestuarii (strain DSM 271 / SK 413).